Here is a 436-residue protein sequence, read N- to C-terminus: Xylose isomerase (436 aa).

Residues Asp-306 and Asp-308 each coordinate Mg(2+).

Belongs to the xylose isomerase family. Homotetramer. Requires Mg(2+) as cofactor.

The protein localises to the cytoplasm. The catalysed reaction is alpha-D-xylose = alpha-D-xylulofuranose. This is Xylose isomerase from Rhizobium rhizogenes (strain K84 / ATCC BAA-868) (Agrobacterium radiobacter).